Reading from the N-terminus, the 197-residue chain is ATP-dependent Clp protease proteolytic subunit (197 aa).

The active-site Nucleophile is the Ser-98. The active site involves His-123.

This sequence belongs to the peptidase S14 family. As to quaternary structure, fourteen ClpP subunits assemble into 2 heptameric rings which stack back to back to give a disk-like structure with a central cavity, resembling the structure of eukaryotic proteasomes.

The protein localises to the cytoplasm. It catalyses the reaction Hydrolysis of proteins to small peptides in the presence of ATP and magnesium. alpha-casein is the usual test substrate. In the absence of ATP, only oligopeptides shorter than five residues are hydrolyzed (such as succinyl-Leu-Tyr-|-NHMec, and Leu-Tyr-Leu-|-Tyr-Trp, in which cleavage of the -Tyr-|-Leu- and -Tyr-|-Trp bonds also occurs).. Its function is as follows. Cleaves peptides in various proteins in a process that requires ATP hydrolysis. Has a chymotrypsin-like activity. Plays a major role in the degradation of misfolded proteins. This is ATP-dependent Clp protease proteolytic subunit from Limosilactobacillus reuteri (strain DSM 20016) (Lactobacillus reuteri).